A 315-amino-acid chain; its full sequence is Lipoyl synthase (315 aa).

The [4Fe-4S] cluster site is built by Cys-62, Cys-67, Cys-73, Cys-88, Cys-92, Cys-95, and Ser-302. Positions 73 to 291 (CFGHGTATFM…GELAKKLGFS (219 aa)) constitute a Radical SAM core domain.

The protein belongs to the radical SAM superfamily. Lipoyl synthase family. The cofactor is [4Fe-4S] cluster.

The protein resides in the cytoplasm. The enzyme catalyses [[Fe-S] cluster scaffold protein carrying a second [4Fe-4S](2+) cluster] + N(6)-octanoyl-L-lysyl-[protein] + 2 oxidized [2Fe-2S]-[ferredoxin] + 2 S-adenosyl-L-methionine + 4 H(+) = [[Fe-S] cluster scaffold protein] + N(6)-[(R)-dihydrolipoyl]-L-lysyl-[protein] + 4 Fe(3+) + 2 hydrogen sulfide + 2 5'-deoxyadenosine + 2 L-methionine + 2 reduced [2Fe-2S]-[ferredoxin]. It functions in the pathway protein modification; protein lipoylation via endogenous pathway; protein N(6)-(lipoyl)lysine from octanoyl-[acyl-carrier-protein]: step 2/2. In terms of biological role, catalyzes the radical-mediated insertion of two sulfur atoms into the C-6 and C-8 positions of the octanoyl moiety bound to the lipoyl domains of lipoate-dependent enzymes, thereby converting the octanoylated domains into lipoylated derivatives. The polypeptide is Lipoyl synthase (Coxiella burnetii (strain Dugway 5J108-111)).